The following is a 201-amino-acid chain: FMN-dependent NADH:quinone oxidoreductase (201 aa).

FMN-binding positions include S9 and 16–18 (SYS).

It belongs to the azoreductase type 1 family. In terms of assembly, homodimer. Requires FMN as cofactor.

The catalysed reaction is 2 a quinone + NADH + H(+) = 2 a 1,4-benzosemiquinone + NAD(+). It carries out the reaction N,N-dimethyl-1,4-phenylenediamine + anthranilate + 2 NAD(+) = 2-(4-dimethylaminophenyl)diazenylbenzoate + 2 NADH + 2 H(+). In terms of biological role, quinone reductase that provides resistance to thiol-specific stress caused by electrophilic quinones. Also exhibits azoreductase activity. Catalyzes the reductive cleavage of the azo bond in aromatic azo compounds to the corresponding amines. This is FMN-dependent NADH:quinone oxidoreductase from Mesomycoplasma hyopneumoniae (strain J / ATCC 25934 / NCTC 10110) (Mycoplasma hyopneumoniae).